Here is a 346-residue protein sequence, read N- to C-terminus: Putative cytochrome bd menaquinol oxidase subunit II (346 aa).

The next 9 membrane-spanning stretches (helical) occupy residues A7–M27, V63–L83, L87–F107, Y119–T139, A164–A184, K201–M221, F236–P256, L269–H289, and A312–W332.

It belongs to the cytochrome ubiquinol oxidase subunit 2 family.

The protein resides in the cell membrane. May have a role in sporulation. Can compensate for the loss of cytochrome aa3. The protein is Putative cytochrome bd menaquinol oxidase subunit II (ythB) of Bacillus subtilis (strain 168).